The following is a 157-amino-acid chain: Transcription elongation factor GreA (157 aa).

It belongs to the GreA/GreB family.

Necessary for efficient RNA polymerase transcription elongation past template-encoded arresting sites. The arresting sites in DNA have the property of trapping a certain fraction of elongating RNA polymerases that pass through, resulting in locked ternary complexes. Cleavage of the nascent transcript by cleavage factors such as GreA or GreB allows the resumption of elongation from the new 3'terminus. GreA releases sequences of 2 to 3 nucleotides. This Hyphomonas neptunium (strain ATCC 15444) protein is Transcription elongation factor GreA.